Consider the following 415-residue polypeptide: Gamma-glutamyl phosphate reductase (415 aa).

It belongs to the gamma-glutamyl phosphate reductase family.

The protein resides in the cytoplasm. It catalyses the reaction L-glutamate 5-semialdehyde + phosphate + NADP(+) = L-glutamyl 5-phosphate + NADPH + H(+). It functions in the pathway amino-acid biosynthesis; L-proline biosynthesis; L-glutamate 5-semialdehyde from L-glutamate: step 2/2. Catalyzes the NADPH-dependent reduction of L-glutamate 5-phosphate into L-glutamate 5-semialdehyde and phosphate. The product spontaneously undergoes cyclization to form 1-pyrroline-5-carboxylate. The sequence is that of Gamma-glutamyl phosphate reductase from Dictyoglomus turgidum (strain DSM 6724 / Z-1310).